Here is a 204-residue protein sequence, read N- to C-terminus: Peptide deformylase (204 aa).

Fe cation contacts are provided by Cys-131 and His-174. Residue Glu-175 is part of the active site. Residue His-178 participates in Fe cation binding.

This sequence belongs to the polypeptide deformylase family. It depends on Fe(2+) as a cofactor.

It carries out the reaction N-terminal N-formyl-L-methionyl-[peptide] + H2O = N-terminal L-methionyl-[peptide] + formate. Removes the formyl group from the N-terminal Met of newly synthesized proteins. Requires at least a dipeptide for an efficient rate of reaction. N-terminal L-methionine is a prerequisite for activity but the enzyme has broad specificity at other positions. In Streptococcus pyogenes serotype M49 (strain NZ131), this protein is Peptide deformylase.